Here is a 203-residue protein sequence, read N- to C-terminus: Small ribosomal subunit protein uS4c (203 aa).

Residues 18-42 (LPGLTSKRPKNRKDSMNMNRSSSRK) are disordered. Positions 33–42 (MNMNRSSSRK) are enriched in polar residues. The S4 RNA-binding domain maps to 91-152 (MRLDNIIFRL…QPRLRAIIKK (62 aa)).

The protein belongs to the universal ribosomal protein uS4 family. As to quaternary structure, part of the 30S ribosomal subunit. Contacts protein S5. The interaction surface between S4 and S5 is involved in control of translational fidelity.

It localises to the plastid. The protein resides in the chloroplast. Functionally, one of the primary rRNA binding proteins, it binds directly to 16S rRNA where it nucleates assembly of the body of the 30S subunit. Its function is as follows. With S5 and S12 plays an important role in translational accuracy. In Pinus koraiensis (Korean pine), this protein is Small ribosomal subunit protein uS4c (rps4).